We begin with the raw amino-acid sequence, 714 residues long: MSPEGEESHAEDNLYFHNTQMQSIHEETLAEESHAQSIQRSISRLSSFKHEDTDSESPIPVQKVIRHIKKTNTNTNTTKTKKRKLKVSKPRKNMSSSESVRQMYGSRKNGEQQGSIDGFLMSRFGDVDGCNESDRSSKLISQGEWESLSKFHEESNEKDKLLRKKIQRYYSEPQEELGEGCGMLSQASADPETKMTKEELESLYDLDSSTVFNQTTISAIGDMSEPTQVSEPCVVILSQTKVQSEASTQEDGADASVQEIKSSVPTQELFSTPEFVPAPLEQPVNKEVCSDQSIVVLEENVQSTQADDSDIVELISDSDPEPEEVSTKVQVLRSIYDSSGPVNDKQPSVASETVESDSTPIVSPVKTPQGTRMHVVQVASSNPSSPIKIVEENTEQQEEVFTDVESIYSTARTSFGTPKHTSPVILLESSDTDCDDNDNDVEPLSSMPMVKTVPKKRMRTTVLQVSAALKVQNYTDEKNNIKLRKIGDDIPVEVPTKDVEYEEIPDSQESVGGEGDNSVSIIEITREVHNNDYTGDESTDLFQVGLNKQDTCEDTSSPVVQIGGVENDILDSSLIEPVPEPESVPVPEEVQEQPQPTAIDKHTATQLREKFQLWGLKPVRGKEKMVEILQGISNFILPEHELLAVADKQELQSCIFMKLDAVIREGRAMYDRILSFEPIRIEELQMMLQSQDYYLELDVLRLYCDSSGITTTNA.

2 stretches are compositionally biased toward basic and acidic residues: residues 1-14 (MSPEGEESHAEDNL) and 24-34 (IHEETLAEESH). Disordered regions lie at residues 1-116 (MSPE…QGSI) and 337-369 (DSSGPVNDKQPSVASETVESDSTPIVSPVKTPQ). A compositionally biased stretch (low complexity) spans 36–46 (QSIQRSISRLS). Residues 79–92 (KTKKRKLKVSKPRK) are compositionally biased toward basic residues.

This sequence belongs to the SLX4 family. As to quaternary structure, forms a heterodimer with SLX1. Post-translationally, phosphorylated in response to DNA damage.

It localises to the nucleus. In terms of biological role, regulatory subunit of the SLX1-SLX4 structure-specific endonuclease that resolves DNA secondary structures generated during DNA repair and recombination. Has endonuclease activity towards branched DNA substrates, introducing single-strand cuts in duplex DNA close to junctions with ss-DNA. The protein is Structure-specific endonuclease subunit SLX4 1 of Candida tropicalis (strain ATCC MYA-3404 / T1) (Yeast).